We begin with the raw amino-acid sequence, 1245 residues long: Trafficking protein particle complex II-specific subunit 130 homolog (1245 aa).

2 disordered regions span residues 488–524 (GDGS…TSLP) and 884–903 (HVGG…TRKV). Low complexity-rich tracts occupy residues 495–507 (ANSK…SASN) and 888–898 (TDASKTSSSST).

It belongs to the TMEM1 family. Part of the multisubunit TRAPP (transport protein particle) II complex composed of BET3, BET5, TRS20, TRS23, TRS31, TRS33, TRS65, TRS85, TRS120 and TRS130.

Its subcellular location is the golgi apparatus. It is found in the trans-Golgi network. The protein resides in the early endosome. Specific subunit of the TRAPP II complex, a highly conserved vesicle tethering complex that is required for the proper transport of proteins in post-Golgi trafficking pathways to the growing cell plate in mitotic active cells. This Oryza sativa subsp. japonica (Rice) protein is Trafficking protein particle complex II-specific subunit 130 homolog.